The chain runs to 550 residues: Hydroxylamine reductase (550 aa).

4 residues coordinate [2Fe-2S] cluster: C3, C6, C18, and C25. Hybrid [4Fe-2O-2S] cluster is bound by residues H249, E273, C317, C405, C433, C458, E492, and K494. At C405 the chain carries Cysteine persulfide.

The protein belongs to the HCP family. It depends on [2Fe-2S] cluster as a cofactor. Hybrid [4Fe-2O-2S] cluster is required as a cofactor.

It localises to the cytoplasm. It catalyses the reaction A + NH4(+) + H2O = hydroxylamine + AH2 + H(+). Its function is as follows. Catalyzes the reduction of hydroxylamine to form NH(3) and H(2)O. This Salmonella typhimurium (strain LT2 / SGSC1412 / ATCC 700720) protein is Hydroxylamine reductase.